The chain runs to 750 residues: ABC transporter D family member 3 (750 aa).

Over residues 1-14 (MKKNNVNNITETLN) the composition is skewed to polar residues. The interval 1–32 (MKKNNVNNITETLNSSSSSSSSSGSSSDEEVK) is disordered. The span at 15 to 26 (SSSSSSSSSGSS) shows a compositional bias: low complexity. Helical transmembrane passes span 63–83 (IVIILYEKPVIPLLLFLLLFG), 123–143 (FAIGGSALFDAIIKFIVSIMA), 188–208 (FTTLLSSIVSQCITGPMVVVY), and 215–235 (TTIDWYAPLIVYGYFFLGYFI). One can recognise an ABC transmembrane type-1 domain in the interval 74 to 362 (PLLLFLLLFG…EQAKQQFEAL (289 aa)). The stretch at 334 to 370 (ALLKRSNKNIKNEELLVEEEQAKQQFEALLKNKKRVI) forms a coiled coil. The chain crosses the membrane as a helical span at residues 382 to 402 (MFTFFSPLINYFIISIPVFFL). Residues 507 to 737 (ITLDDVTYFT…SNNINTINID (231 aa)) enclose the ABC transporter domain. 540–547 (GPSGSGKS) serves as a coordination point for ATP.

Belongs to the ABC transporter superfamily. ABCD family. Peroxisomal fatty acyl CoA transporter (TC 3.A.1.203) subfamily.

It localises to the membrane. The chain is ABC transporter D family member 3 (abcD3) from Dictyostelium discoideum (Social amoeba).